Here is a 614-residue protein sequence, read N- to C-terminus: Zinc finger protein 276 (614 aa).

The disordered stretch occupies residues 1–46; that stretch reads MKRDRLGRFLSPGIARQRGGSGGGCGSGRTRGRPSRSGGTSADGAA. The segment covering 19–29 has biased composition (gly residues); the sequence is GGSGGGCGSGR. Positions 78–164 constitute a ZAD domain; it reads GHCRLCHGKF…LQRVNVSPAG (87 aa). The Zn(2+) site is built by C80, C83, C137, and C140. A disordered region spans residues 271-422; the sequence is RLAQNSESNP…PGPKPGWKKK (152 aa). 2 stretches are compositionally biased toward polar residues: residues 272–282 and 291–302; these read LAQNSESNPTG and RETQVGSETKTL. Residues 357–369 show a composition bias toward acidic residues; sequence SDLSEGDFLSEDE. Residues 386–408 are compositionally biased toward basic and acidic residues; that stretch reads YPEKKVSGKKSEGREAKRPEEPK. Positions 409-422 are enriched in basic residues; sequence IRKKPGPKPGWKKK. C2H2-type zinc fingers lie at residues 434 to 458, 465 to 490, 496 to 518, 524 to 546, and 554 to 577; these read YKCP…IKEH, RPCP…KLIH, YICD…QMRH, LQCE…MTKH, and FACD…SMVH. A disordered region spans residues 588 to 614; sequence PLEAEPPPGPLSPSGTMEGQAVKPEPT.

As to expression, found in all the examined tissues, with highest levels in kidney, liver, lung, and spleen.

Its subcellular location is the nucleus. The protein localises to the chromosome. The protein resides in the centromere. It localises to the kinetochore. May be involved in transcriptional regulation. This chain is Zinc finger protein 276 (Znf276), found in Mus musculus (Mouse).